The sequence spans 509 residues: Cysteine--tRNA ligase (509 aa).

Residue C19 coordinates Zn(2+). The 'HIGH' region signature appears at 21–31; that stretch reads PTVYNDAHIGH. Positions 213, 238, and 242 each coordinate Zn(2+). Residues 284–288 carry the 'KMSKS' region motif; that stretch reads KMSKS. K287 lines the ATP pocket.

Belongs to the class-I aminoacyl-tRNA synthetase family. Zn(2+) serves as cofactor.

The catalysed reaction is tRNA(Cys) + L-cysteine + ATP = L-cysteinyl-tRNA(Cys) + AMP + diphosphate. The chain is Cysteine--tRNA ligase (CARS) from Acanthamoeba polyphaga (Amoeba).